The primary structure comprises 140 residues: Putative pre-16S rRNA nuclease (140 aa).

Belongs to the YqgF nuclease family.

The protein resides in the cytoplasm. Functionally, could be a nuclease involved in processing of the 5'-end of pre-16S rRNA. The chain is Putative pre-16S rRNA nuclease from Vibrio vulnificus (strain CMCP6).